We begin with the raw amino-acid sequence, 515 residues long: DNA-directed RNA polymerase subunit Rpo2N (515 aa).

It belongs to the RNA polymerase beta chain family. Part of the RNA polymerase complex.

Its subcellular location is the cytoplasm. It catalyses the reaction RNA(n) + a ribonucleoside 5'-triphosphate = RNA(n+1) + diphosphate. In terms of biological role, DNA-dependent RNA polymerase (RNAP) catalyzes the transcription of DNA into RNA using the four ribonucleoside triphosphates as substrates. The Rpo2 subunit (Rpo2N and Rpo2C in this organism) is implicated in DNA promoter recognition and in nucleotide binding. This Methanothermobacter thermautotrophicus (strain Winter) (Methanobacterium thermoautotrophicum) protein is DNA-directed RNA polymerase subunit Rpo2N.